We begin with the raw amino-acid sequence, 492 residues long: Ketol-acid reductoisomerase (NADP(+)) (492 aa).

Positions 15 to 208 (AQLGKCRFMA…GGHRAGVLES (194 aa)) constitute a KARI N-terminal Rossmann domain. NADP(+) contacts are provided by residues 45–48 (CGAQ), R68, R76, S78, and 108–110 (DKQ). H132 is a catalytic residue. G158 provides a ligand contact to NADP(+). 2 KARI C-terminal knotted domains span residues 209 to 344 (SFVA…NAPQ) and 345 to 485 (FEGK…MTDM). The Mg(2+) site is built by D217, E221, E389, and E393. Position 414 (S414) interacts with substrate.

The protein belongs to the ketol-acid reductoisomerase family. Mg(2+) serves as cofactor.

The catalysed reaction is (2R)-2,3-dihydroxy-3-methylbutanoate + NADP(+) = (2S)-2-acetolactate + NADPH + H(+). The enzyme catalyses (2R,3R)-2,3-dihydroxy-3-methylpentanoate + NADP(+) = (S)-2-ethyl-2-hydroxy-3-oxobutanoate + NADPH + H(+). The protein operates within amino-acid biosynthesis; L-isoleucine biosynthesis; L-isoleucine from 2-oxobutanoate: step 2/4. It participates in amino-acid biosynthesis; L-valine biosynthesis; L-valine from pyruvate: step 2/4. Its function is as follows. Involved in the biosynthesis of branched-chain amino acids (BCAA). Catalyzes an alkyl-migration followed by a ketol-acid reduction of (S)-2-acetolactate (S2AL) to yield (R)-2,3-dihydroxy-isovalerate. In the isomerase reaction, S2AL is rearranged via a Mg-dependent methyl migration to produce 3-hydroxy-3-methyl-2-ketobutyrate (HMKB). In the reductase reaction, this 2-ketoacid undergoes a metal-dependent reduction by NADPH to yield (R)-2,3-dihydroxy-isovalerate. This Yersinia pseudotuberculosis serotype O:3 (strain YPIII) protein is Ketol-acid reductoisomerase (NADP(+)).